The following is a 350-amino-acid chain: Anthranilate phosphoribosyltransferase (350 aa).

5-phospho-alpha-D-ribose 1-diphosphate contacts are provided by residues glycine 94, glycine 97 to aspartate 98, threonine 102, asparagine 104 to threonine 107, lysine 122 to serine 130, and serine 134. Glycine 94 provides a ligand contact to anthranilate. Serine 106 serves as a coordination point for Mg(2+). An anthranilate-binding site is contributed by asparagine 125. Arginine 180 is a binding site for anthranilate. 2 residues coordinate Mg(2+): aspartate 239 and glutamate 240.

It belongs to the anthranilate phosphoribosyltransferase family. In terms of assembly, homodimer. Mg(2+) serves as cofactor.

The catalysed reaction is N-(5-phospho-beta-D-ribosyl)anthranilate + diphosphate = 5-phospho-alpha-D-ribose 1-diphosphate + anthranilate. It participates in amino-acid biosynthesis; L-tryptophan biosynthesis; L-tryptophan from chorismate: step 2/5. In terms of biological role, catalyzes the transfer of the phosphoribosyl group of 5-phosphorylribose-1-pyrophosphate (PRPP) to anthranilate to yield N-(5'-phosphoribosyl)-anthranilate (PRA). The protein is Anthranilate phosphoribosyltransferase of Geobacter sulfurreducens (strain ATCC 51573 / DSM 12127 / PCA).